Consider the following 169-residue polypeptide: Cell cycle link protein (169 aa).

Residues 9-22 (LPLELREKIVRDHL) are binding to host SKP1 protein. The short motif at 110–114 (LSCGE) is the LXCXE motif, interaction with host RBR element.

Belongs to the nanovirus Clink protein family. As to quaternary structure, interacts with host SKP1. Interacts (via LXCXE domain) with host retinoblastoma-related protein 1 (RBR1). Interacts (via LXCXE domain) with retinoblastoma-related proteins (RBR).

In terms of biological role, interacts with and disrupts the function of host retinoblastoma-related proteins RBR, which are key regulators of the cell cycle. Induces transcriptional activation of E2F-regulated S-phase and G2/M-phase-specific genes. Inactivation of the ability of RBR to arrest the cell cycle leads to the stimulation of viral DNA replication. The polypeptide is Cell cycle link protein (DNA-C) (Astragalus sinicus (Chinese milk vetch)).